The chain runs to 335 residues: tRNA N6-adenosine threonylcarbamoyltransferase (335 aa).

Residues His111 and His115 each coordinate Fe cation. Substrate is bound by residues 133-137 (LISGG), Asp166, Gly179, and Asn276. Asp301 is a binding site for Fe cation.

It belongs to the KAE1 / TsaD family. Fe(2+) serves as cofactor.

The protein resides in the cytoplasm. The catalysed reaction is L-threonylcarbamoyladenylate + adenosine(37) in tRNA = N(6)-L-threonylcarbamoyladenosine(37) in tRNA + AMP + H(+). Required for the formation of a threonylcarbamoyl group on adenosine at position 37 (t(6)A37) in tRNAs that read codons beginning with adenine. Is involved in the transfer of the threonylcarbamoyl moiety of threonylcarbamoyl-AMP (TC-AMP) to the N6 group of A37, together with TsaE and TsaB. TsaD likely plays a direct catalytic role in this reaction. This Wolbachia pipientis wMel protein is tRNA N6-adenosine threonylcarbamoyltransferase.